A 388-amino-acid chain; its full sequence is Lamin tail domain-containing protein 1 (388 aa).

One can recognise an LTD domain in the interval 136–254 (EVGQFTSSSL…QAIAWYTPIH (119 aa)). Positions 349–388 (EPHNTSTAGGRLDRQPRTRSTRPNRASGSKKKKTSESQKQ) are disordered. Over residues 365 to 381 (RTRSTRPNRASGSKKKK) the composition is skewed to basic residues.

This sequence belongs to the intermediate filament family.

This chain is Lamin tail domain-containing protein 1 (LMNTD1), found in Homo sapiens (Human).